We begin with the raw amino-acid sequence, 333 residues long: Serine proteinase inhibitor 2 (333 aa).

This sequence belongs to the serpin family. Poxviruses subfamily.

The protein resides in the host cytoplasm. Weak inhibitor of the interleukin-1-beta converting enzyme (ICE) and of granzyme B. Does not form a stable complex with ICE, but can for a stable complex with granzyme B. This is Serine proteinase inhibitor 2 (SERP2) from Myxoma virus (strain Uriarra) (MYXV).